The primary structure comprises 163 residues: Nucleotide-binding protein GTNG_0630 (163 aa).

This sequence belongs to the YajQ family.

In terms of biological role, nucleotide-binding protein. The chain is Nucleotide-binding protein GTNG_0630 from Geobacillus thermodenitrificans (strain NG80-2).